The following is a 246-amino-acid chain: Homeobox protein Hox-B4a (246 aa).

Residues 23–125 (YSQSDYLPSH…SQNTSTVSSR (103 aa)) form a disordered region. 2 stretches are compositionally biased toward polar residues: residues 39 to 48 (AQRQDPSFQH) and 112 to 123 (QTPTSQNTSTVS). The Antp-type hexapeptide motif lies at 130–135 (VYPWMK). The homeobox DNA-binding region spans 151–210 (PKRSRTAYTRQQVLELEKEFHYNRYLTRRRRVEIAHTLCLSERQIKIWFQNRRMKWKKDH). The disordered stretch occupies residues 210-246 (HKLPNTKIRSNSASTNSSGCPTLCSNQSRASGPPPSL). Polar residues predominate over residues 216-239 (KIRSNSASTNSSGCPTLCSNQSRA).

Belongs to the Antp homeobox family. Deformed subfamily.

Its subcellular location is the nucleus. Functionally, sequence-specific transcription factor which is part of a developmental regulatory system that provides cells with specific positional identities on the anterior-posterior axis. This Danio rerio (Zebrafish) protein is Homeobox protein Hox-B4a (hoxb4a).